Consider the following 434-residue polypeptide: Serine hydroxymethyltransferase (434 aa).

Residues Leu133 and Gly137 to Leu139 contribute to the (6S)-5,6,7,8-tetrahydrofolate site. Lys242 is modified (N6-(pyridoxal phosphate)lysine).

This sequence belongs to the SHMT family. Homodimer. Pyridoxal 5'-phosphate is required as a cofactor.

The protein localises to the cytoplasm. It catalyses the reaction (6R)-5,10-methylene-5,6,7,8-tetrahydrofolate + glycine + H2O = (6S)-5,6,7,8-tetrahydrofolate + L-serine. Its pathway is one-carbon metabolism; tetrahydrofolate interconversion. The protein operates within amino-acid biosynthesis; glycine biosynthesis; glycine from L-serine: step 1/1. Catalyzes the reversible interconversion of serine and glycine with tetrahydrofolate (THF) serving as the one-carbon carrier. This reaction serves as the major source of one-carbon groups required for the biosynthesis of purines, thymidylate, methionine, and other important biomolecules. Also exhibits THF-independent aldolase activity toward beta-hydroxyamino acids, producing glycine and aldehydes, via a retro-aldol mechanism. This is Serine hydroxymethyltransferase from Methylorubrum extorquens (strain CM4 / NCIMB 13688) (Methylobacterium extorquens).